Consider the following 152-residue polypeptide: 3-hydroxyacyl-[acyl-carrier-protein] dehydratase FabZ (152 aa).

Residue histidine 57 is part of the active site.

Belongs to the thioester dehydratase family. FabZ subfamily.

It localises to the cytoplasm. The catalysed reaction is a (3R)-hydroxyacyl-[ACP] = a (2E)-enoyl-[ACP] + H2O. In terms of biological role, involved in unsaturated fatty acids biosynthesis. Catalyzes the dehydration of short chain beta-hydroxyacyl-ACPs and long chain saturated and unsaturated beta-hydroxyacyl-ACPs. In Xanthomonas axonopodis pv. citri (strain 306), this protein is 3-hydroxyacyl-[acyl-carrier-protein] dehydratase FabZ.